The chain runs to 330 residues: Ketol-acid reductoisomerase (NADP(+)) (330 aa).

Residues 1–181 enclose the KARI N-terminal Rossmann domain; it reads MKMYYESDVN…GFTKAGVIET (181 aa). NADP(+) is bound by residues 24–27, R47, S52, and 82–85; these read YGSQ and DEIQ. H107 is an active-site residue. G133 lines the NADP(+) pocket. In terms of domain architecture, KARI C-terminal knotted spans 182–327; the sequence is TFKEETETDL…ERLRKACGLQ (146 aa). 4 residues coordinate Mg(2+): D190, E194, E226, and E230. A substrate-binding site is contributed by S251.

The protein belongs to the ketol-acid reductoisomerase family. It depends on Mg(2+) as a cofactor.

The catalysed reaction is (2R)-2,3-dihydroxy-3-methylbutanoate + NADP(+) = (2S)-2-acetolactate + NADPH + H(+). It catalyses the reaction (2R,3R)-2,3-dihydroxy-3-methylpentanoate + NADP(+) = (S)-2-ethyl-2-hydroxy-3-oxobutanoate + NADPH + H(+). Its pathway is amino-acid biosynthesis; L-isoleucine biosynthesis; L-isoleucine from 2-oxobutanoate: step 2/4. It functions in the pathway amino-acid biosynthesis; L-valine biosynthesis; L-valine from pyruvate: step 2/4. Functionally, involved in the biosynthesis of branched-chain amino acids (BCAA). Catalyzes an alkyl-migration followed by a ketol-acid reduction of (S)-2-acetolactate (S2AL) to yield (R)-2,3-dihydroxy-isovalerate. In the isomerase reaction, S2AL is rearranged via a Mg-dependent methyl migration to produce 3-hydroxy-3-methyl-2-ketobutyrate (HMKB). In the reductase reaction, this 2-ketoacid undergoes a metal-dependent reduction by NADPH to yield (R)-2,3-dihydroxy-isovalerate. This Methanobrevibacter smithii (strain ATCC 35061 / DSM 861 / OCM 144 / PS) protein is Ketol-acid reductoisomerase (NADP(+)).